A 947-amino-acid chain; its full sequence is Bifunctional glutamine synthetase adenylyltransferase/adenylyl-removing enzyme (947 aa).

Residues 1-440 (MTPLSSPLRQ…VFNELIGDDE (440 aa)) are adenylyl removase. The tract at residues 450-947 (SEPWREVWQD…ASWRKWLVAV (498 aa)) is adenylyl transferase.

The protein belongs to the GlnE family. Mg(2+) is required as a cofactor.

It carries out the reaction [glutamine synthetase]-O(4)-(5'-adenylyl)-L-tyrosine + phosphate = [glutamine synthetase]-L-tyrosine + ADP. The enzyme catalyses [glutamine synthetase]-L-tyrosine + ATP = [glutamine synthetase]-O(4)-(5'-adenylyl)-L-tyrosine + diphosphate. Functionally, involved in the regulation of glutamine synthetase GlnA, a key enzyme in the process to assimilate ammonia. When cellular nitrogen levels are high, the C-terminal adenylyl transferase (AT) inactivates GlnA by covalent transfer of an adenylyl group from ATP to specific tyrosine residue of GlnA, thus reducing its activity. Conversely, when nitrogen levels are low, the N-terminal adenylyl removase (AR) activates GlnA by removing the adenylyl group by phosphorolysis, increasing its activity. The regulatory region of GlnE binds the signal transduction protein PII (GlnB) which indicates the nitrogen status of the cell. The polypeptide is Bifunctional glutamine synthetase adenylyltransferase/adenylyl-removing enzyme (Salmonella arizonae (strain ATCC BAA-731 / CDC346-86 / RSK2980)).